Here is a 448-residue protein sequence, read N- to C-terminus: B-cell lymphoma 3 protein homolog (448 aa).

Residues 1–54 form a disordered region; the sequence is MPRCPAGAMDEGPVDLRTRPKGTPGAALPLRKRPLRPASPEPATTRSPAGPLDA. Ser39 bears the Phosphoserine mark. ANK repeat units lie at residues 129 to 161, 166 to 195, 199 to 228, 236 to 265, 270 to 299, 303 to 332, and 333 to 362; these read DGDT…REVD, LRQT…SPMA, HGQT…SGSV, EGLT…DIDA, SGRS…NVNA, SGSS…DSGL, and KNCH…RAAS. Positions 356 to 448 are disordered; the sequence is KASRAASGSQ…VPPSPAPGSS (93 aa). Residues 361–376 show a composition bias toward polar residues; it reads ASGSQPEPSPDQSATN. Phosphoserine is present on Ser369. A compositionally biased stretch (low complexity) spans 377-398; the sequence is SPESSSRLSSNGLQSSPSSSPS. Residues Ser396 and Ser400 each carry the phosphoserine; by GSK3 modification. Positions 411–423 are enriched in polar residues; that stretch reads TPQNFFLPTTSTP. Over residues 425–436 the composition is skewed to low complexity; sequence FLPFPGVLRGPG. The span at 437–448 shows a compositional bias: pro residues; the sequence is RPVPPSPAPGSS.

As to quaternary structure, component of a complex consisting of the NF-kappa-B p52-p52 homodimer and BCL3. Component of a complex consisting of the NF-kappa-B p50-p50 homodimer and BCL3. Interacts with N4BP2, COPS5 and PIR. Interacts with CYLD. In terms of processing, polyubiquitinated. Ubiquitination via 'Lys-63'-linked ubiquitin chains is required for nuclear accumulation. Deubiquitinated by CYLD, which acts on 'Lys-63'-linked ubiquitin chains. Deubiquitination by CYLD prevents nuclear accumulation. Activated by phosphorylation.

It localises to the nucleus. The protein resides in the cytoplasm. Its subcellular location is the perinuclear region. Its function is as follows. Contributes to the regulation of transcriptional activation of NF-kappa-B target genes. In the cytoplasm, inhibits the nuclear translocation of the NF-kappa-B p50 subunit. In the nucleus, acts as a transcriptional activator that promotes transcription of NF-kappa-B target genes. Contributes to the regulation of cell proliferation. The sequence is that of B-cell lymphoma 3 protein homolog (Bcl3) from Mus musculus (Mouse).